Consider the following 316-residue polypeptide: Methionyl-tRNA formyltransferase (316 aa).

Position 109–112 (109–112 (SLLP)) interacts with (6S)-5,6,7,8-tetrahydrofolate.

The protein belongs to the Fmt family.

It catalyses the reaction L-methionyl-tRNA(fMet) + (6R)-10-formyltetrahydrofolate = N-formyl-L-methionyl-tRNA(fMet) + (6S)-5,6,7,8-tetrahydrofolate + H(+). In terms of biological role, attaches a formyl group to the free amino group of methionyl-tRNA(fMet). The formyl group appears to play a dual role in the initiator identity of N-formylmethionyl-tRNA by promoting its recognition by IF2 and preventing the misappropriation of this tRNA by the elongation apparatus. The sequence is that of Methionyl-tRNA formyltransferase from Nitrosomonas eutropha (strain DSM 101675 / C91 / Nm57).